Here is a 449-residue protein sequence, read N- to C-terminus: Amidophosphoribosyltransferase (449 aa).

Positions 1–9 (MRGEIMKEK) are excised as a propeptide. The active-site Nucleophile is the C10. Residues 10-224 (CGIFGAYSQD…PGEVIVVKDG (215 aa)) form the Glutamine amidotransferase type-2 domain. C239 contributes to the [4Fe-4S] cluster binding site. The Mg(2+) site is built by S286, D346, and D347. Residues C383, C432, and C435 each coordinate [4Fe-4S] cluster.

The protein in the C-terminal section; belongs to the purine/pyrimidine phosphoribosyltransferase family. It depends on Mg(2+) as a cofactor. Requires [4Fe-4S] cluster as cofactor.

It carries out the reaction 5-phospho-beta-D-ribosylamine + L-glutamate + diphosphate = 5-phospho-alpha-D-ribose 1-diphosphate + L-glutamine + H2O. Its pathway is purine metabolism; IMP biosynthesis via de novo pathway; N(1)-(5-phospho-D-ribosyl)glycinamide from 5-phospho-alpha-D-ribose 1-diphosphate: step 1/2. In terms of biological role, catalyzes the formation of phosphoribosylamine from phosphoribosylpyrophosphate (PRPP) and glutamine. In Pyrococcus horikoshii (strain ATCC 700860 / DSM 12428 / JCM 9974 / NBRC 100139 / OT-3), this protein is Amidophosphoribosyltransferase.